The following is a 618-amino-acid chain: MRVDSTVLALVALATDCLGLAIKSNEPELLRRDALPIYKNASYCVDERVRDLLSRMTLEEKAGQLFHKQLSEGPLDDDSSGNSTETMIGKKHMTHFNLASDITNATQTAEFINLIQKRALQTRLGIPITISTDPRHSFTENVGTGFQAGVFSQWPESLGLAALRDPQLVREFAEVAREEYLAVGIRAALHPQVDLSTEPRWARISGTWGENSTLTSELIVEYIKGFQGEGKLGPKSVKTVTKHFPGGGPMENGEDSHFYYGKNQTYPGNNIDEHLIPFKAALAAGATEIMPYYSRPIGTNWEAVGFSFNKEIVTDLLRGELGFDGIVLTDWGLITDTYIGNQYMPARAWGVEYLSELQRAARILDAGCDQFGGEERPELIVQLVREGTISEDRIDVSVARLLKEKFLLGLFDNPFVNASAANNIVGNEHFVNLGRDAQRRSYTLLTNNQTILPLAKPGEGTRFYIEGFDSAFMSARNYTVVNTTEEADFALLRYNAPYEPRNGTFEANFHAGSLAFNATEKARQAKIYSSLPTIVDIILDRPAVIPEVVEQAQAVLASYGSDSEAFLDVVFGVSKPEGKLPFDLPRSMDAVEAQAEDLPFDTENPVFRYGHGLEYEDN.

The signal sequence occupies residues 1 to 19 (MRVDSTVLALVALATDCLG). N-linked (GlcNAc...) asparagine glycans are attached at residues Asn40, Asn82, Asn104, Asn211, and Asn263. Asp330 is an active-site residue. N-linked (GlcNAc...) asparagine glycans are attached at residues Asn417, Asn448, Asn477, Asn482, Asn502, and Asn517.

The protein belongs to the glycosyl hydrolase 3 family.

It is found in the secreted. It carries out the reaction Hydrolysis of terminal, non-reducing beta-D-glucosyl residues with release of beta-D-glucose.. It participates in glycan metabolism; cellulose degradation. Its function is as follows. Beta-glucosidases are one of a number of cellulolytic enzymes involved in the degradation of cellulosic biomass. Catalyzes the last step releasing glucose from the inhibitory cellobiose. In Emericella nidulans (strain FGSC A4 / ATCC 38163 / CBS 112.46 / NRRL 194 / M139) (Aspergillus nidulans), this protein is Beta-glucosidase C (bglC).